Here is a 347-residue protein sequence, read N- to C-terminus: NADH-quinone oxidoreductase subunit H (347 aa).

8 helical membrane passes run 21–41 (VAGI…IIYA), 87–107 (GLFL…WAVI), 118–138 (INVG…GVIL), 157–177 (AQMI…VLFA), 195–215 (GIVN…MFLI), 258–278 (NVLL…LPPI), 283–303 (LYAV…FFVF), and 323–343 (WKIF…YLML).

Belongs to the complex I subunit 1 family. In terms of assembly, NDH-1 is composed of 14 different subunits. Subunits NuoA, H, J, K, L, M, N constitute the membrane sector of the complex.

The protein localises to the cell inner membrane. It carries out the reaction a quinone + NADH + 5 H(+)(in) = a quinol + NAD(+) + 4 H(+)(out). Functionally, NDH-1 shuttles electrons from NADH, via FMN and iron-sulfur (Fe-S) centers, to quinones in the respiratory chain. The immediate electron acceptor for the enzyme in this species is believed to be ubiquinone. Couples the redox reaction to proton translocation (for every two electrons transferred, four hydrogen ions are translocated across the cytoplasmic membrane), and thus conserves the redox energy in a proton gradient. This subunit may bind ubiquinone. The chain is NADH-quinone oxidoreductase subunit H from Sphingopyxis alaskensis (strain DSM 13593 / LMG 18877 / RB2256) (Sphingomonas alaskensis).